We begin with the raw amino-acid sequence, 423 residues long: COP9 signalosome complex subunit 3 (423 aa).

Position 2 is an N-acetylalanine (A2). Residues 197-365 form the PCI domain; the sequence is NFERALYFYE…GMVSFHDNPE (169 aa). A disordered region spans residues 402 to 423; it reads QFVQKSMGSQEDDSGNKPSSYS. A phosphoserine mark is found at S407, S410, and S423.

The protein belongs to the CSN3 family. In terms of assembly, component of the CSN complex, composed of COPS1/GPS1, COPS2, COPS3, COPS4, COPS5, COPS6, COPS7 (COPS7A or COPS7B), COPS8 and COPS9. In the complex, it probably interacts directly with COPS1, COPS4, COPS8 and COPS9. Interacts with CK2 and PKD. Interacts with the translation initiation factor EIF3S6 and IKBKG. Interacts with ERCC6.

The protein resides in the cytoplasm. It is found in the nucleus. In terms of biological role, component of the COP9 signalosome complex (CSN), a complex involved in various cellular and developmental processes. The CSN complex is an essential regulator of the ubiquitin (Ubl) conjugation pathway by mediating the deneddylation of the cullin subunits of SCF-type E3 ligase complexes, leading to decrease the Ubl ligase activity of SCF-type complexes such as SCF, CSA or DDB2. The complex is also involved in phosphorylation of p53/TP53, c-jun/JUN, IkappaBalpha/NFKBIA, ITPK1 and IRF8/ICSBP, possibly via its association with CK2 and PKD kinases. CSN-dependent phosphorylation of TP53 and JUN promotes and protects degradation by the Ubl system, respectively. Essential to maintain the survival of epiblast cells and thus the development of the postimplantation embryo. In Bos taurus (Bovine), this protein is COP9 signalosome complex subunit 3 (COPS3).